The primary structure comprises 471 residues: Adenosylhomocysteinase (471 aa).

Residues threonine 60, aspartate 135, and glutamate 196 each contribute to the substrate site. An NAD(+)-binding site is contributed by threonine 197 to threonine 199. Lysine 226 and aspartate 230 together coordinate substrate. Residues asparagine 231, glycine 260 to glycine 265, glutamate 283, asparagine 318, isoleucine 339 to histidine 341, and asparagine 387 contribute to the NAD(+) site.

Belongs to the adenosylhomocysteinase family. Requires NAD(+) as cofactor.

It localises to the cytoplasm. The catalysed reaction is S-adenosyl-L-homocysteine + H2O = L-homocysteine + adenosine. The protein operates within amino-acid biosynthesis; L-homocysteine biosynthesis; L-homocysteine from S-adenosyl-L-homocysteine: step 1/1. Its function is as follows. May play a key role in the regulation of the intracellular concentration of adenosylhomocysteine. The protein is Adenosylhomocysteinase of Chlorobaculum parvum (strain DSM 263 / NCIMB 8327) (Chlorobium vibrioforme subsp. thiosulfatophilum).